Reading from the N-terminus, the 224-residue chain is UPF0758 protein VIBHAR_00653 (224 aa).

Residues 102–224 (ALTSPEQTKL…SVSFAERGWI (123 aa)) form the MPN domain. Zn(2+) is bound by residues His173, His175, and Asp186. Positions 173–186 (HNHPSGVAEPSQAD) match the JAMM motif motif.

This sequence belongs to the UPF0758 family.

In Vibrio campbellii (strain ATCC BAA-1116), this protein is UPF0758 protein VIBHAR_00653.